Consider the following 87-residue polypeptide: Defensin-like protein 100 (87 aa).

The first 29 residues, 1–29 (MRSLRLRTVVVATIVVCLSVLLSPTEVDG), serve as a signal peptide directing secretion. 4 cysteine pairs are disulfide-bonded: Cys31/Cys79, Cys38/Cys64, Cys44/Cys76, and Cys48/Cys78.

It belongs to the DEFL family.

It is found in the secreted. This is Defensin-like protein 100 from Arabidopsis thaliana (Mouse-ear cress).